The chain runs to 603 residues: Beta-glucuronidase (603 aa).

2 residues coordinate D-glucuronate: Asp163 and Asn412. Glu413 serves as the catalytic Proton donor. The D-glucuronate site is built by Asn466, Tyr472, Glu504, Trp549, and Lys568. The Nucleophile role is filled by Glu504. Residues 566–568 (NKK) carry the N-K motif motif.

It belongs to the glycosyl hydrolase 2 family. As to quaternary structure, homotetramer.

It carries out the reaction a beta-D-glucuronoside + H2O = D-glucuronate + an alcohol. The enzyme catalyses 4-methylumbelliferone beta-D-glucuronate + H2O = 4-methylumbelliferone + D-glucuronate. With respect to regulation, potently inhibited by a set of synthetic compounds like thio-urea derivatives and analogs, and uronic isofagomine (UIFG) derivatives. Inhibitors of gut microbial beta-glucuronidases block the reactivation of glucuronidated cancer drugs, and thereby alleviate drug-induced GI toxicity. Functionally, displays beta-glucuronidase activity with the artificial substrate p-nitrophenyl-beta-D-glucuronide (PNPG) and with 4-methylumbelliferyl-glucuronide. Is likely capable of scavenging glucuronate from a range of chemically distinct xenobiotic and endobiotic glucuronides present in the gastrointestinal (GI) tract, to be able to utilize these diverse sources of carbon. As part of the GI microbiome, this enzyme is able to reactivate glucuronide drug conjugates, such reactivated compounds can significantly damage the GI tract. This chain is Beta-glucuronidase (uidA), found in Escherichia coli (strain K12).